The sequence spans 195 residues: Imidazole glycerol phosphate synthase subunit HisH (195 aa).

The 193-residue stretch at 1 to 193 folds into the Glutamine amidotransferase type-1 domain; sequence MIAIVDYGVG…RETTCNSTQQ (193 aa). The active-site Nucleophile is the cysteine 78. Catalysis depends on residues histidine 168 and glutamate 170.

Heterodimer of HisH and HisF.

The protein resides in the cytoplasm. It catalyses the reaction 5-[(5-phospho-1-deoxy-D-ribulos-1-ylimino)methylamino]-1-(5-phospho-beta-D-ribosyl)imidazole-4-carboxamide + L-glutamine = D-erythro-1-(imidazol-4-yl)glycerol 3-phosphate + 5-amino-1-(5-phospho-beta-D-ribosyl)imidazole-4-carboxamide + L-glutamate + H(+). The catalysed reaction is L-glutamine + H2O = L-glutamate + NH4(+). It participates in amino-acid biosynthesis; L-histidine biosynthesis; L-histidine from 5-phospho-alpha-D-ribose 1-diphosphate: step 5/9. IGPS catalyzes the conversion of PRFAR and glutamine to IGP, AICAR and glutamate. The HisH subunit catalyzes the hydrolysis of glutamine to glutamate and ammonia as part of the synthesis of IGP and AICAR. The resulting ammonia molecule is channeled to the active site of HisF. This chain is Imidazole glycerol phosphate synthase subunit HisH, found in Exiguobacterium sibiricum (strain DSM 17290 / CCUG 55495 / CIP 109462 / JCM 13490 / 255-15).